A 350-amino-acid polypeptide reads, in one-letter code: Ion-translocating oxidoreductase complex subunit D (350 aa).

Helical transmembrane passes span 15-35 (QTQT…LAQT), 36-56 (WFFG…ALGA), 67-87 (PIKP…IGLS), 88-108 (LPPL…IIIA), and 122-142 (PAMV…TSWL). An FMN phosphoryl threonine modification is found at Thr186. Transmembrane regions (helical) follow at residues 213-233 (WGGI…LFLL), 242-262 (IPGA…LMTP), 264-284 (ATAT…AFFI), and 299-316 (LVYG…RRFG).

Belongs to the NqrB/RnfD family. The complex is composed of six subunits: RnfA, RnfB, RnfC, RnfD, RnfE and RnfG. FMN is required as a cofactor.

It is found in the cell inner membrane. In terms of biological role, part of a membrane-bound complex that couples electron transfer with translocation of ions across the membrane. This is Ion-translocating oxidoreductase complex subunit D from Aeromonas salmonicida (strain A449).